The sequence spans 620 residues: MTSPTSLDQLKQQIKIAPIVEHYAIKLKKKGKDFVALCPFHADQNPSMTVSVAKNIFKCFSCQVGGDGIAFIQKIDQVDWKTALNKALSILNLDSQYAVNFYLKEVDPKLKRYWDLHSALVDYYQTRLKLEPKEQGLTYLTETRKLSPQVIERFQLGLAFTLEDQYFLPSLLNYPWISPAIEKAELCFATEKFPEALGFFNQQTHYATFKSRIMIPIHDLKGNPVGFSGRALQKTEKIKYKNSAEHQWFKKSELLFNFHRIDKNTLKLYLVEGYFDVFALTSAGIGDVVGLMGLALSESHIIAFQQQLKALETVVLALDNDTAGHDATFKLLQELNAHGIIVEVVDWNQAAYKDWDELFLAEGSDAVKAKTHRVLNLVEYLVAYFKTKGFDERITVNKVIDIIAQNQKVTADTSFSRFLCQKLQQLLQYSDVETLFTQLQQQKLKVKVNKTTTFTQRAPIYESVVGVVDNSFRNESQPVAITKEFLVENNWKETKERVFHAEIFAYVLLDKQFLVELKQSDLDELFASLQTPLFDVALFIDKARLYWAKVQEPDWAVFNSILGEQQAMFPTTFLAQIKEFFLNKSLSYDPEDYEEDLQFFRQLIVKQKELLKYFKSMVEH.

The segment at 38-62 adopts a CHC2-type zinc-finger fold; the sequence is CPFHADQNPSMTVSVAKNIFKCFSC. Positions 266–350 constitute a Toprim domain; sequence LKLYLVEGYF…IVEVVDWNQA (85 aa). Mg(2+)-binding residues include Glu-272, Asp-319, and Asp-321.

This sequence belongs to the DnaG primase family. In terms of assembly, monomer. Interacts with DnaB. Zn(2+) is required as a cofactor. Mg(2+) serves as cofactor.

It carries out the reaction ssDNA + n NTP = ssDNA/pppN(pN)n-1 hybrid + (n-1) diphosphate.. RNA polymerase that catalyzes the synthesis of short RNA molecules used as primers for DNA polymerase during DNA replication. This Mycoplasma pneumoniae (strain ATCC 29342 / M129 / Subtype 1) (Mycoplasmoides pneumoniae) protein is DNA primase.